The chain runs to 177 residues: Translationally-controlled tumor protein homolog (177 aa).

The 177-residue stretch at 1-177 (MIIYRDLFSG…IKQGLVVEKC (177 aa)) folds into the TCTP domain.

This sequence belongs to the TCTP family.

The protein localises to the cytoplasm. Involved in calcium binding and microtubule stabilization. The chain is Translationally-controlled tumor protein homolog from Trichinella pseudospiralis (Parasitic roundworm).